The primary structure comprises 469 residues: 3-isopropylmalate dehydratase large subunit (469 aa).

Residues Cys-350, Cys-410, and Cys-413 each contribute to the [4Fe-4S] cluster site.

The protein belongs to the aconitase/IPM isomerase family. LeuC type 1 subfamily. Heterodimer of LeuC and LeuD. It depends on [4Fe-4S] cluster as a cofactor.

It carries out the reaction (2R,3S)-3-isopropylmalate = (2S)-2-isopropylmalate. It participates in amino-acid biosynthesis; L-leucine biosynthesis; L-leucine from 3-methyl-2-oxobutanoate: step 2/4. In terms of biological role, catalyzes the isomerization between 2-isopropylmalate and 3-isopropylmalate, via the formation of 2-isopropylmaleate. In Sinorhizobium fredii (strain NBRC 101917 / NGR234), this protein is 3-isopropylmalate dehydratase large subunit.